The following is a 334-amino-acid chain: Holliday junction branch migration complex subunit RuvB (334 aa).

A large ATPase domain (RuvB-L) region spans residues 4 to 184 (ADRIISPNAT…FGIVQRLEFY (181 aa)). Residues isoleucine 23, arginine 24, glycine 65, lysine 68, threonine 69, threonine 70, 131–133 (EDY), arginine 174, tyrosine 184, and arginine 221 each bind ATP. Threonine 69 serves as a coordination point for Mg(2+). The tract at residues 185 to 255 (SVEDLRHIVA…VADKALNMLN (71 aa)) is small ATPAse domain (RuvB-S). Residues 258-334 (LHGFDHMDRR…YNHFGLTMPE (77 aa)) are head domain (RuvB-H). DNA-binding residues include arginine 313 and arginine 318.

The protein belongs to the RuvB family. In terms of assembly, homohexamer. Forms an RuvA(8)-RuvB(12)-Holliday junction (HJ) complex. HJ DNA is sandwiched between 2 RuvA tetramers; dsDNA enters through RuvA and exits via RuvB. An RuvB hexamer assembles on each DNA strand where it exits the tetramer. Each RuvB hexamer is contacted by two RuvA subunits (via domain III) on 2 adjacent RuvB subunits; this complex drives branch migration. In the full resolvosome a probable DNA-RuvA(4)-RuvB(12)-RuvC(2) complex forms which resolves the HJ.

The protein resides in the cytoplasm. The catalysed reaction is ATP + H2O = ADP + phosphate + H(+). In terms of biological role, the RuvA-RuvB-RuvC complex processes Holliday junction (HJ) DNA during genetic recombination and DNA repair, while the RuvA-RuvB complex plays an important role in the rescue of blocked DNA replication forks via replication fork reversal (RFR). RuvA specifically binds to HJ cruciform DNA, conferring on it an open structure. The RuvB hexamer acts as an ATP-dependent pump, pulling dsDNA into and through the RuvAB complex. RuvB forms 2 homohexamers on either side of HJ DNA bound by 1 or 2 RuvA tetramers; 4 subunits per hexamer contact DNA at a time. Coordinated motions by a converter formed by DNA-disengaged RuvB subunits stimulates ATP hydrolysis and nucleotide exchange. Immobilization of the converter enables RuvB to convert the ATP-contained energy into a lever motion, pulling 2 nucleotides of DNA out of the RuvA tetramer per ATP hydrolyzed, thus driving DNA branch migration. The RuvB motors rotate together with the DNA substrate, which together with the progressing nucleotide cycle form the mechanistic basis for DNA recombination by continuous HJ branch migration. Branch migration allows RuvC to scan DNA until it finds its consensus sequence, where it cleaves and resolves cruciform DNA. This chain is Holliday junction branch migration complex subunit RuvB, found in Hahella chejuensis (strain KCTC 2396).